Here is a 464-residue protein sequence, read N- to C-terminus: Argininosuccinate lyase (464 aa).

This sequence belongs to the lyase 1 family. Argininosuccinate lyase subfamily.

The protein resides in the cytoplasm. It carries out the reaction 2-(N(omega)-L-arginino)succinate = fumarate + L-arginine. It participates in amino-acid biosynthesis; L-arginine biosynthesis; L-arginine from L-ornithine and carbamoyl phosphate: step 3/3. This is Argininosuccinate lyase from Koribacter versatilis (strain Ellin345).